The sequence spans 277 residues: Proteasome subunit beta type-7 (277 aa).

A propeptide spans 1 to 43 (MAAVSVFQPPVGGFSFDNCRRNAVLEADFAKKGFKLPKARKTG) (removed in mature form). Catalysis depends on threonine 44, which acts as the Nucleophile.

The protein belongs to the peptidase T1B family. The 26S proteasome consists of a 20S proteasome core and two 19S regulatory subunits. The 20S proteasome core is a barrel-shaped complex made of 28 subunits that are arranged in four stacked rings. The two outer rings are each formed by seven alpha subunits, and the two inner rings are formed by seven beta subunits. The proteolytic activity is exerted by three beta-subunits PSMB5, PSMB6 and PSMB7.

It is found in the cytoplasm. It localises to the nucleus. It catalyses the reaction Cleavage of peptide bonds with very broad specificity.. Functionally, component of the 20S core proteasome complex involved in the proteolytic degradation of most intracellular proteins. This complex plays numerous essential roles within the cell by associating with different regulatory particles. Associated with two 19S regulatory particles, forms the 26S proteasome and thus participates in the ATP-dependent degradation of ubiquitinated proteins. The 26S proteasome plays a key role in the maintenance of protein homeostasis by removing misfolded or damaged proteins that could impair cellular functions, and by removing proteins whose functions are no longer required. Associated with the PA200 or PA28, the 20S proteasome mediates ubiquitin-independent protein degradation. This type of proteolysis is required in several pathways including spermatogenesis (20S-PA200 complex) or generation of a subset of MHC class I-presented antigenic peptides (20S-PA28 complex). Within the 20S core complex, PSMB7 displays a trypsin-like activity. The sequence is that of Proteasome subunit beta type-7 (Psmb7) from Mus musculus (Mouse).